The following is a 179-amino-acid chain: ATP-dependent protease subunit HslV (179 aa).

The active site involves Thr-8. Positions 163, 166, and 169 each coordinate Na(+).

Belongs to the peptidase T1B family. HslV subfamily. As to quaternary structure, a double ring-shaped homohexamer of HslV is capped on each side by a ring-shaped HslU homohexamer. The assembly of the HslU/HslV complex is dependent on binding of ATP.

It is found in the cytoplasm. The catalysed reaction is ATP-dependent cleavage of peptide bonds with broad specificity.. Allosterically activated by HslU binding. Functionally, protease subunit of a proteasome-like degradation complex believed to be a general protein degrading machinery. The protein is ATP-dependent protease subunit HslV of Solibacter usitatus (strain Ellin6076).